The following is a 250-amino-acid chain: Tryptophan synthase alpha chain (250 aa).

Catalysis depends on proton acceptor residues glutamate 31 and aspartate 42.

The protein belongs to the TrpA family. Tetramer of two alpha and two beta chains.

It carries out the reaction (1S,2R)-1-C-(indol-3-yl)glycerol 3-phosphate + L-serine = D-glyceraldehyde 3-phosphate + L-tryptophan + H2O. It functions in the pathway amino-acid biosynthesis; L-tryptophan biosynthesis; L-tryptophan from chorismate: step 5/5. The alpha subunit is responsible for the aldol cleavage of indoleglycerol phosphate to indole and glyceraldehyde 3-phosphate. The protein is Tryptophan synthase alpha chain of Staphylococcus carnosus (strain TM300).